A 635-amino-acid chain; its full sequence is Threonine--tRNA ligase (635 aa).

One can recognise a TGS domain in the interval 1-58 (MIRVICDNETFELPTGSTAADFASKIKNSHYFAGVVINDQIKDLSTTLSEGDVLKFVT). The segment at 237–528 (DHRVLGTKLD…LIEHFKGRFP (292 aa)) is catalytic. C328, H379, and H505 together coordinate Zn(2+).

Belongs to the class-II aminoacyl-tRNA synthetase family. In terms of assembly, homodimer. The cofactor is Zn(2+).

It localises to the cytoplasm. It catalyses the reaction tRNA(Thr) + L-threonine + ATP = L-threonyl-tRNA(Thr) + AMP + diphosphate + H(+). Its function is as follows. Catalyzes the attachment of threonine to tRNA(Thr) in a two-step reaction: L-threonine is first activated by ATP to form Thr-AMP and then transferred to the acceptor end of tRNA(Thr). Also edits incorrectly charged L-seryl-tRNA(Thr). This chain is Threonine--tRNA ligase, found in Chlamydia felis (strain Fe/C-56) (Chlamydophila felis).